Here is a 98-residue protein sequence, read N- to C-terminus: Keratin, high sulfur matrix protein, IIIB4 (98 aa).

Ala-1 carries the post-translational modification N-acetylalanine.

It belongs to the KRTAP type 3 family. As to quaternary structure, interacts with wool keratins. Wool.

In terms of biological role, in the wool cortex, wool keratin intermediate filaments are embedded in an interfilamentous matrix, consisting of hair keratin-associated proteins (KRTAP), which are essential for the formation of a rigid and resistant wool shaft through their extensive disulfide bond cross-linking with abundant cysteine residues of wool keratins. The matrix proteins include the high-sulfur and high-glycine-tyrosine keratins. In Ovis aries (Sheep), this protein is Keratin, high sulfur matrix protein, IIIB4.